Consider the following 545-residue polypeptide: Ribulokinase (545 aa).

The protein belongs to the ribulokinase family.

The enzyme catalyses D-ribulose + ATP = D-ribulose 5-phosphate + ADP + H(+). It carries out the reaction L-ribulose + ATP = L-ribulose 5-phosphate + ADP + H(+). It functions in the pathway carbohydrate degradation; L-arabinose degradation via L-ribulose; D-xylulose 5-phosphate from L-arabinose (bacterial route): step 2/3. In Staphylococcus aureus (strain USA300), this protein is Ribulokinase.